The following is a 197-amino-acid chain: ATP synthase subunit delta (197 aa).

Low complexity predominate over residues Met-1–Gln-16. The disordered stretch occupies residues Met-1–Ser-20.

It belongs to the ATPase delta chain family. As to quaternary structure, F-type ATPases have 2 components, F(1) - the catalytic core - and F(0) - the membrane proton channel. F(1) has five subunits: alpha(3), beta(3), gamma(1), delta(1), epsilon(1). F(0) has three main subunits: a(1), b(2) and c(10-14). The alpha and beta chains form an alternating ring which encloses part of the gamma chain. F(1) is attached to F(0) by a central stalk formed by the gamma and epsilon chains, while a peripheral stalk is formed by the delta and b chains.

Its subcellular location is the cell inner membrane. Functionally, f(1)F(0) ATP synthase produces ATP from ADP in the presence of a proton or sodium gradient. F-type ATPases consist of two structural domains, F(1) containing the extramembraneous catalytic core and F(0) containing the membrane proton channel, linked together by a central stalk and a peripheral stalk. During catalysis, ATP synthesis in the catalytic domain of F(1) is coupled via a rotary mechanism of the central stalk subunits to proton translocation. In terms of biological role, this protein is part of the stalk that links CF(0) to CF(1). It either transmits conformational changes from CF(0) to CF(1) or is implicated in proton conduction. The protein is ATP synthase subunit delta of Acidiphilium cryptum (strain JF-5).